Reading from the N-terminus, the 168-residue chain is I-Kappa-B like protein G2 (168 aa).

ANK repeat units follow at residues serine 56–glycine 88 and glycine 93–alanine 123.

This sequence belongs to the polydnaviridae I-Kappa-B-like protein family.

Functionally, suppresses the host immune response through NF-kappa-B inactivation. Possesses ankyrin repeat domains required for NF-kappa-B binding but lacks the regulatory regions required for dissociation from NF-kappa-B and degradation. Therefore, prevents host NF-kappa-B release and subsequent activation. The polypeptide is I-Kappa-B like protein G2 (G4) (Microplitis demolitor (Parasitoid wasp)).